The chain runs to 325 residues: UPF0324 membrane protein Bd1437 (325 aa).

The next 8 membrane-spanning stretches (helical) occupy residues Ile21–Leu43, Tyr58–Gly80, Ile87–Gly105, Ser115–Ile137, Val144–Gly166, Ala211–Gly230, Pro243–Pro260, and Leu302–Ile324.

The protein belongs to the UPF0324 family.

Its subcellular location is the cell membrane. The polypeptide is UPF0324 membrane protein Bd1437 (Bdellovibrio bacteriovorus (strain ATCC 15356 / DSM 50701 / NCIMB 9529 / HD100)).